Reading from the N-terminus, the 618-residue chain is 1-deoxy-D-xylulose-5-phosphate synthase (618 aa).

Residues His-73 and 114–116 each bind thiamine diphosphate; that span reads GHS. Asp-145 lines the Mg(2+) pocket. Residues 146 to 147, Asn-174, Tyr-284, and Glu-364 each bind thiamine diphosphate; that span reads GA. Residue Asn-174 coordinates Mg(2+).

Belongs to the transketolase family. DXPS subfamily. Homodimer. Mg(2+) is required as a cofactor. Requires thiamine diphosphate as cofactor.

It catalyses the reaction D-glyceraldehyde 3-phosphate + pyruvate + H(+) = 1-deoxy-D-xylulose 5-phosphate + CO2. It functions in the pathway metabolic intermediate biosynthesis; 1-deoxy-D-xylulose 5-phosphate biosynthesis; 1-deoxy-D-xylulose 5-phosphate from D-glyceraldehyde 3-phosphate and pyruvate: step 1/1. Functionally, catalyzes the acyloin condensation reaction between C atoms 2 and 3 of pyruvate and glyceraldehyde 3-phosphate to yield 1-deoxy-D-xylulose-5-phosphate (DXP). This is 1-deoxy-D-xylulose-5-phosphate synthase from Clostridium beijerinckii (strain ATCC 51743 / NCIMB 8052) (Clostridium acetobutylicum).